Here is a 361-residue protein sequence, read N- to C-terminus: Peptide chain release factor 1 (361 aa).

Glutamine 237 carries the post-translational modification N5-methylglutamine. The segment covering 283-296 has biased composition (basic and acidic residues); that stretch reads VEDEKRRSEEESTR. The interval 283 to 305 is disordered; it reads VEDEKRRSEEESTRRNLVSSGDR.

The protein belongs to the prokaryotic/mitochondrial release factor family. Methylated by PrmC. Methylation increases the termination efficiency of RF1.

It localises to the cytoplasm. Functionally, peptide chain release factor 1 directs the termination of translation in response to the peptide chain termination codons UAG and UAA. This chain is Peptide chain release factor 1, found in Shewanella woodyi (strain ATCC 51908 / MS32).